The primary structure comprises 167 residues: MVPPEEIASASNPDIEGENILHFLCREGDITDLMAFKNVISDANRHLALQFNRHGKQCVHIVSNPGIADPQEKLKLLMEWGADINGQERVFGNTPLHIAAYTQNHKLATWLCNQPGINMGIYNYLFKTPYYVACERHDLKIMNILRAKGTRCGVYRCRDAWLFTQKY.

ANK repeat units follow at residues 54–86 (HGKQ…DING), 91–121 (FGNT…NMGI), and 125–154 (LFKT…RCGV).

It belongs to the polydnaviridae I-Kappa-B-like protein family.

Functionally, suppresses the host immune response through NF-kappa-B inactivation. Possesses ankyrin repeat domains required for NF-kappa-B binding but lacks the regulatory regions required for dissociation from NF-kappa-B and degradation. Therefore, prevents host NF-kappa-B release and subsequent activation. The polypeptide is I-Kappa-B like protein F2 (F3) (Microplitis demolitor bracovirus (isolate Webb) (MdBV)).